The following is a 333-amino-acid chain: Fructose-1,6-bisphosphatase class 1 1 (333 aa).

Mg(2+)-binding residues include Glu81, Asp100, Leu102, and Asp103. Residues 103 to 106 (DGSS) and Asn191 each bind substrate. Mg(2+) is bound at residue Glu263.

The protein belongs to the FBPase class 1 family. Homotetramer. Mg(2+) is required as a cofactor.

It is found in the cytoplasm. The enzyme catalyses beta-D-fructose 1,6-bisphosphate + H2O = beta-D-fructose 6-phosphate + phosphate. It participates in carbohydrate biosynthesis; Calvin cycle. This chain is Fructose-1,6-bisphosphatase class 1 1, found in Cereibacter sphaeroides (strain ATCC 17025 / ATH 2.4.3) (Rhodobacter sphaeroides).